Here is a 205-residue protein sequence, read N- to C-terminus: Ribonuclease HII (205 aa).

One can recognise an RNase H type-2 domain in the interval 15-205; it reads SRVCGIDEAG…SFKLRKLGEK (191 aa). Asp21, Glu22, and Asp117 together coordinate a divalent metal cation.

The protein belongs to the RNase HII family. It depends on Mn(2+) as a cofactor. Requires Mg(2+) as cofactor.

It is found in the cytoplasm. The catalysed reaction is Endonucleolytic cleavage to 5'-phosphomonoester.. Its function is as follows. Endonuclease that specifically degrades the RNA of RNA-DNA hybrids. The polypeptide is Ribonuclease HII (Chlorobaculum parvum (strain DSM 263 / NCIMB 8327) (Chlorobium vibrioforme subsp. thiosulfatophilum)).